The chain runs to 53 residues: Mannose/glucose-specific lectin alpha chain (53 aa).

This sequence belongs to the leguminous lectin family. In terms of assembly, heterodimer of an alpha and a beta chain.

This lectin specifically binds mannose and glucose. This is Mannose/glucose-specific lectin alpha chain from Vicia cracca (Bird vetch).